Consider the following 156-residue polypeptide: Small ribosomal subunit protein uS7 (156 aa).

This sequence belongs to the universal ribosomal protein uS7 family. As to quaternary structure, part of the 30S ribosomal subunit. Contacts proteins S9 and S11.

Its function is as follows. One of the primary rRNA binding proteins, it binds directly to 16S rRNA where it nucleates assembly of the head domain of the 30S subunit. Is located at the subunit interface close to the decoding center, probably blocks exit of the E-site tRNA. The chain is Small ribosomal subunit protein uS7 from Deinococcus radiodurans (strain ATCC 13939 / DSM 20539 / JCM 16871 / CCUG 27074 / LMG 4051 / NBRC 15346 / NCIMB 9279 / VKM B-1422 / R1).